We begin with the raw amino-acid sequence, 118 residues long: Small ribosomal subunit protein uS13 (118 aa).

The disordered stretch occupies residues 91–118; that stretch reads HRRGLPVRGQRTKTNARTRKGPRKPIKK.

It belongs to the universal ribosomal protein uS13 family. Part of the 30S ribosomal subunit. Forms a loose heterodimer with protein S19. Forms two bridges to the 50S subunit in the 70S ribosome.

Located at the top of the head of the 30S subunit, it contacts several helices of the 16S rRNA. In the 70S ribosome it contacts the 23S rRNA (bridge B1a) and protein L5 of the 50S subunit (bridge B1b), connecting the 2 subunits; these bridges are implicated in subunit movement. Contacts the tRNAs in the A and P-sites. The polypeptide is Small ribosomal subunit protein uS13 (Photorhabdus laumondii subsp. laumondii (strain DSM 15139 / CIP 105565 / TT01) (Photorhabdus luminescens subsp. laumondii)).